A 359-amino-acid chain; its full sequence is Nicotinate-nucleotide--dimethylbenzimidazole phosphoribosyltransferase (359 aa).

Residue E318 is the Proton acceptor of the active site.

Belongs to the CobT family. Homodimer.

It carries out the reaction 5,6-dimethylbenzimidazole + nicotinate beta-D-ribonucleotide = alpha-ribazole 5'-phosphate + nicotinate + H(+). It participates in nucleoside biosynthesis; alpha-ribazole biosynthesis; alpha-ribazole from 5,6-dimethylbenzimidazole: step 1/2. Catalyzes the synthesis of alpha-ribazole-5'-phosphate from nicotinate mononucleotide (NAMN) and 5,6-dimethylbenzimidazole (DMB). This Escherichia coli O9:H4 (strain HS) protein is Nicotinate-nucleotide--dimethylbenzimidazole phosphoribosyltransferase.